The primary structure comprises 207 residues: 8-oxoguanine DNA glycosylase/AP lyase (207 aa).

Residues lysine 129 and aspartate 147 contribute to the active site.

The protein belongs to the type-2 OGG1 family.

It catalyses the reaction 2'-deoxyribonucleotide-(2'-deoxyribose 5'-phosphate)-2'-deoxyribonucleotide-DNA = a 3'-end 2'-deoxyribonucleotide-(2,3-dehydro-2,3-deoxyribose 5'-phosphate)-DNA + a 5'-end 5'-phospho-2'-deoxyribonucleoside-DNA + H(+). In terms of biological role, catalyzes the excision of an oxidatively damaged form of guanine (7,8-dihydro-8-oxoguanine = 8-oxoG) from DNA. Also cleaves the DNA backbone at apurinic/apyrimidinic sites (AP sites). This chain is 8-oxoguanine DNA glycosylase/AP lyase, found in Thermotoga sp. (strain RQ2).